Consider the following 1018-residue polypeptide: MGRESRHYRKRSSSRGRSGSLSKSRSPDSKRSKKDDRTASRTHSRRERSRSRERRRSRERKRQRRSSRDRRRSRSRERRRSKSRSRGRSKEKPENGDQTADKKKIKEEKEEEKPEDQDFDQNTLEEEMRKRKERVEKWREEQRKTAMENIGEIKKELEEMKQGKKWSLEDDDEEQDKAAEAEESERMEEEEVGEEVDPLDAYMEEVKEEVKKFNMGTMKGANDKKGGMSVTKVVTVVKTKKMPHATKKKGELMENDQDAMEYSSEEEEVDLQTALTGFQTKQRKVLEPVDHQKIQYEPFRKNFYVEVPELARMSPEEVSEYRLELEGISVKGKGCPKPIKTWVQCGISMKVLNALKKHNYEKPTPIQAQAIPAIMSGRDLIGIAKTGSGKTIAFLLPMFRHILDQRPVGEAEGPLAVIMTPTRELALQITKECKKFSKSLALRVVCVYGGTGISEQIAELKRGAEIIVCTPGRMIDMLGANNGRVTNLRRVTYVVIDEADRMFDMGFEPQVMRIVDNVRPDRQTVMFSATFPRTMEALARRILSKPVEVQVGGRSVVCSDVEQHVIVIEEEKKFLKLLEILGHYQEKGSVIIFVDKQEHADGLLKDLMKASYPCMSLHGGIDQYDRDSIINDFKNGACRLLVATSVAARGLDVKQLILVVNYSCPNHYEDYVHRAGRTGRAGNKGYAYTFITEGQARYSGDILKALELSGSSVPAELEQLWTNFKEQQKAEGKIIKSSSGFSGKGFKFDETEHALANERKKLQKWALGLHDSDDEDTALDIDEQIESMFNSKKRVKDFSAPGSVSAGSAGGVSGSVSAVSGLGSLSTPSAGNIQKLEIAKKLALRIQAQKNLGAEAQDVMQQATNAILRGGTIIAPSVSAKTIAEQQAEKINAKLNYTPVEKLEEERQAAEAAETVKRYEEELEINDFPQTARWKVTSKEALQRIGEYSEAAITIRGTYFPPGKEPKEGERKIYLAIESANELAVQKAKAEITRLIKEELIRLQNSYQPTSKGRYKVL.

A compositionally biased stretch (basic residues) spans 1-14; it reads MGRESRHYRKRSSS. The disordered stretch occupies residues 1-200; sequence MGRESRHYRK…EVGEEVDPLD (200 aa). Low complexity predominate over residues 15 to 24; it reads RGRSGSLSKS. A compositionally biased stretch (basic and acidic residues) spans 25 to 39; it reads RSPDSKRSKKDDRTA. Residues 40–87 are compositionally biased toward basic residues; sequence SRTHSRRERSRSRERRRSRERKRQRRSSRDRRRSRSRERRRSKSRSRG. Residues 88 to 112 are compositionally biased toward basic and acidic residues; sequence RSKEKPENGDQTADKKKIKEEKEEE. Residues 113-125 show a composition bias toward acidic residues; that stretch reads KPEDQDFDQNTLE. The span at 126-168 shows a compositional bias: basic and acidic residues; that stretch reads EEMRKRKERVEKWREEQRKTAMENIGEIKKELEEMKQGKKWSL. The segment covering 169–200 has biased composition (acidic residues); that stretch reads EDDDEEQDKAAEAEESERMEEEEVGEEVDPLD. A Q motif motif is present at residues 340-368; sequence KTWVQCGISMKVLNALKKHNYEKPTPIQA. Residues 371–549 form the Helicase ATP-binding domain; that stretch reads IPAIMSGRDL…RRILSKPVEV (179 aa). 384–391 provides a ligand contact to ATP; the sequence is AKTGSGKT. The short motif at 497-500 is the DEAD box element; sequence DEAD. The region spanning 560 to 721 is the Helicase C-terminal domain; sequence DVEQHVIVIE…SVPAELEQLW (162 aa). Positions 900–927 form a coiled coil; the sequence is VEKLEEERQAAEAAETVKRYEEELEIND.

Belongs to the DEAD box helicase family. DDX46/PRP5 subfamily. As to quaternary structure, component of the 17S U2 SnRNP complex, a ribonucleoprotein complex that contains small nuclear RNA (snRNA) U2 and a number of specific proteins.

The protein resides in the nucleus speckle. Its subcellular location is the nucleus. The protein localises to the cajal body. It carries out the reaction ATP + H2O = ADP + phosphate + H(+). Component of the 17S U2 SnRNP complex of the spliceosome, a large ribonucleoprotein complex that removes introns from transcribed pre-mRNAs. The 17S U2 SnRNP complex (1) directly participates in early spliceosome assembly and (2) mediates recognition of the intron branch site during pre-mRNA splicing by promoting the selection of the pre-mRNA branch-site adenosine, the nucleophile for the first step of splicing. Within the 17S U2 SnRNP complex, DDX46 plays essential roles during assembly of pre-spliceosome and proofreading of the branch site. This Danio rerio (Zebrafish) protein is Probable ATP-dependent RNA helicase DDX46 (ddx46).